Here is a 238-residue protein sequence, read N- to C-terminus: tRNA (guanine-N(7)-)-methyltransferase (238 aa).

Residues glutamate 68, glutamate 93, aspartate 120, and aspartate 143 each coordinate S-adenosyl-L-methionine. Residue aspartate 143 is part of the active site. Substrate contacts are provided by residues lysine 147, aspartate 179, and 216–219 (TKFE).

This sequence belongs to the class I-like SAM-binding methyltransferase superfamily. TrmB family.

It catalyses the reaction guanosine(46) in tRNA + S-adenosyl-L-methionine = N(7)-methylguanosine(46) in tRNA + S-adenosyl-L-homocysteine. It functions in the pathway tRNA modification; N(7)-methylguanine-tRNA biosynthesis. Catalyzes the formation of N(7)-methylguanine at position 46 (m7G46) in tRNA. The sequence is that of tRNA (guanine-N(7)-)-methyltransferase from Shewanella sp. (strain W3-18-1).